Consider the following 232-residue polypeptide: Zinc import ATP-binding protein ZnuC (232 aa).

Residues 5–220 enclose the ABC transporter domain; it reads VNLKNIFVFY…PSFIEMFGCY (216 aa). 37–44 is a binding site for ATP; sequence GPNGSGKS.

Belongs to the ABC transporter superfamily. Zinc importer (TC 3.A.1.15.5) family. The complex is composed of two ATP-binding proteins (ZnuC), two transmembrane proteins (ZnuB) and a solute-binding protein (ZnuA).

The protein resides in the cell membrane. It catalyses the reaction Zn(2+)(out) + ATP(in) + H2O(in) = Zn(2+)(in) + ADP(in) + phosphate(in) + H(+)(in). In terms of biological role, part of the ABC transporter complex ZnuABC involved in zinc import. Responsible for energy coupling to the transport system. In Wigglesworthia glossinidia brevipalpis, this protein is Zinc import ATP-binding protein ZnuC.